The sequence spans 592 residues: Aspartate--tRNA(Asp/Asn) ligase (592 aa).

Glutamate 177 serves as a coordination point for L-aspartate. The interval 201-204 is aspartate; the sequence is QLFK. Arginine 223 provides a ligand contact to L-aspartate. Residues 223–225 and glutamine 232 contribute to the ATP site; that span reads RDE. Position 451 (histidine 451) interacts with L-aspartate. Glutamate 485 serves as a coordination point for ATP. Residue arginine 492 participates in L-aspartate binding. Residue 537 to 540 coordinates ATP; sequence GLDR.

It belongs to the class-II aminoacyl-tRNA synthetase family. Type 1 subfamily. In terms of assembly, homodimer.

It localises to the cytoplasm. It catalyses the reaction tRNA(Asx) + L-aspartate + ATP = L-aspartyl-tRNA(Asx) + AMP + diphosphate. In terms of biological role, aspartyl-tRNA synthetase with relaxed tRNA specificity since it is able to aspartylate not only its cognate tRNA(Asp) but also tRNA(Asn). Reaction proceeds in two steps: L-aspartate is first activated by ATP to form Asp-AMP and then transferred to the acceptor end of tRNA(Asp/Asn). The sequence is that of Aspartate--tRNA(Asp/Asn) ligase from Bacillus subtilis (strain 168).